The sequence spans 520 residues: Cytochrome P450 monooxygenase 98 (520 aa).

The chain crosses the membrane as a helical span at residues 7–27 (MLNNNLLIVIGTFAVCVYIVL). C445 serves as a coordination point for heme.

Belongs to the cytochrome P450 family. The cofactor is heme.

Its subcellular location is the membrane. The protein operates within secondary metabolite biosynthesis. Its function is as follows. Cytochrome P450 monooxygenase that is able to use pyrene, phenanthrene, 3,5-dimethoxy-trans-stilbene and 3,5,4'-trimethoxy-trans-stilbene as substrates for oxidation. The polypeptide is Cytochrome P450 monooxygenase 98 (Postia placenta (strain ATCC 44394 / Madison 698-R) (Brown rot fungus)).